Reading from the N-terminus, the 227-residue chain is Cell wall mannoprotein CIS3 (227 aa).

Positions 1-21 are cleaved as a signal peptide; sequence MQFKNVALAASVAALSATASA. A propeptide spanning residues 22–64 is cleaved from the precursor; it reads EGYTPGEPWSTLTPTGSISCGAAEYTTTFGIAVQAITSSKAKR. The PIR1/2/3 repeat unit spans residues 65 to 78; that stretch reads DVISQIGDGQVQAT. An O-linked (Man) serine glycan is attached at serine 68. Threonine 78 carries an O-linked (Man) threonine glycan. Residues 83-124 show a composition bias toward low complexity; the sequence is AQATDSQAQATTTATPTSSEKISSSASKTSTNATSSSCATPS. Positions 83 to 127 are disordered; the sequence is AQATDSQAQATTTATPTSSEKISSSASKTSTNATSSSCATPSLKD. 4 O-linked (Man) serine glycosylation sites follow: serine 105, serine 106, serine 107, and serine 109. The O-linked (Man) threonine glycan is linked to threonine 111. The O-linked (Man) serine glycan is linked to serine 112. O-linked (Man) threonine glycosylation occurs at threonine 113. Asparagine 114 is a glycosylation site (N-linked (GlcNAc...) asparagine). A glycan (O-linked (Man) threonine) is linked at threonine 116. Residues serine 117 and serine 118 are each glycosylated (O-linked (Man) serine).

The protein belongs to the PIR protein family. Covalently linked to beta-1,3-glucan of the inner cell wall layer via an alkali-sensitive ester linkage between the gamma-carboxyl group of glutamic acid, arising from Gln-74 within the PIR1/2/3 repeat, and hydroxyl groups of glucoses of beta-1,3-glucan chains. Post-translationally, extensively O-mannosylated. Also N-glycosylated.

Its subcellular location is the secreted. The protein localises to the cell wall. Component of the outer cell wall layer. Required for stability of the cell wall and for optimal growth. Required for resistance against several antifungal and cell wall-perturbing agents. This Saccharomyces cerevisiae (strain ATCC 204508 / S288c) (Baker's yeast) protein is Cell wall mannoprotein CIS3 (CIS3).